We begin with the raw amino-acid sequence, 874 residues long: Alanine--tRNA ligase (874 aa).

Residues histidine 562, histidine 566, cysteine 665, and histidine 669 each coordinate Zn(2+).

This sequence belongs to the class-II aminoacyl-tRNA synthetase family. Zn(2+) serves as cofactor.

It localises to the cytoplasm. It catalyses the reaction tRNA(Ala) + L-alanine + ATP = L-alanyl-tRNA(Ala) + AMP + diphosphate. Functionally, catalyzes the attachment of alanine to tRNA(Ala) in a two-step reaction: alanine is first activated by ATP to form Ala-AMP and then transferred to the acceptor end of tRNA(Ala). Also edits incorrectly charged Ser-tRNA(Ala) and Gly-tRNA(Ala) via its editing domain. This Pseudomonas syringae pv. syringae (strain B728a) protein is Alanine--tRNA ligase.